The following is a 727-amino-acid chain: Iron-sulfur clusters transporter atm1, mitochondrial (727 aa).

Residues N46–T97 are disordered. Residues A60–V77 are compositionally biased toward polar residues. Basic and acidic residues predominate over residues K81–L94. A helical transmembrane segment spans residues V131–F152. The ABC transmembrane type-1 domain maps to V131–Q421. The Mitochondrial intermembrane segment spans residues K153–G175. Residues S176–F199 traverse the membrane as a helical segment. Topologically, residues A200–L248 are mitochondrial matrix. The helical transmembrane segment at L249–Y272 threads the bilayer. A topological domain (mitochondrial intermembrane) is located at residue Q273. Residues Y274–I294 traverse the membrane as a helical segment. The Mitochondrial matrix portion of the chain corresponds to T295 to A360. Residues R300–R304 and N363–Q366 contribute to the glutathione site. A helical membrane pass occupies residues F361 to Y379. Topologically, residues L380–D394 are mitochondrial intermembrane. The helical transmembrane segment at L395–Y416 threads the bilayer. Glutathione is bound at residue G413. Residues R417–Q727 are Mitochondrial matrix-facing. The 237-residue stretch at I456 to A692 folds into the ABC transporter domain. Residues Y465 and G489–R500 each bind ATP. Basic and acidic residues predominate over residues E702–M719. The tract at residues E702–Q727 is disordered.

This sequence belongs to the ABC transporter superfamily. ABCB family. Heavy Metal importer (TC 3.A.1.210) subfamily. Homodimer.

The protein localises to the mitochondrion inner membrane. Its function is as follows. Performs an essential function in the generation of cytoplasmic iron-sulfur proteins by mediating the ATP-dependent export of Fe/S cluster precursors synthesized by nfs1 and other mitochondrial proteins. Hydrolyzes ATP. Binds glutathione and may function by transporting a glutathione-conjugated iron-sulfur compound. The polypeptide is Iron-sulfur clusters transporter atm1, mitochondrial (Aspergillus fumigatus (strain ATCC MYA-4609 / CBS 101355 / FGSC A1100 / Af293) (Neosartorya fumigata)).